The chain runs to 296 residues: 33 kDa chaperonin (296 aa).

Disulfide bonds link Cys238–Cys240 and Cys271–Cys274.

The protein belongs to the HSP33 family. In terms of processing, under oxidizing conditions two disulfide bonds are formed involving the reactive cysteines. Under reducing conditions zinc is bound to the reactive cysteines and the protein is inactive.

Its subcellular location is the cytoplasm. In terms of biological role, redox regulated molecular chaperone. Protects both thermally unfolding and oxidatively damaged proteins from irreversible aggregation. Plays an important role in the bacterial defense system toward oxidative stress. In Clostridium botulinum (strain 657 / Type Ba4), this protein is 33 kDa chaperonin.